Consider the following 153-residue polypeptide: Proline-rich membrane anchor 1 (153 aa).

The first 35 residues, 1–35, serve as a signal peptide directing secretion; it reads MLLRDLVLRHGCCWPSLLLHCALHPLWGLVQVTHA. Topologically, residues 36 to 92 are extracellular; sequence EPQKSCSKVTDSCQHICQCRPPPPLPPPPPPPPPPRLLSAPAPNSTSCPAEDSWWSG. The PRAD domain occupies 56 to 70; it reads PPPPLPPPPPPPPPP. Pro residues predominate over residues 59-71; it reads PLPPPPPPPPPPR. Positions 59 to 79 are disordered; it reads PLPPPPPPPPPPRLLSAPAPN. N79 carries an N-linked (GlcNAc...) asparagine glycan. The helical transmembrane segment at 93–113 threads the bilayer; sequence LVIIVAVVCASLVFLTVLVII. Over 114-153 the chain is Cytoplasmic; that stretch reads CYKAIKRKPLRKDENGASVAEYPMSSSPSNKGVDVNAAVV. The disordered stretch occupies residues 133–153; that stretch reads AEYPMSSSPSNKGVDVNAAVV.

Interacts with ACHE, probably through disulfide bonds. In terms of tissue distribution, isoforms 1 and 2 are expressed in the adult brain. In matured cortical neurons, only isoform 1 is detectable.

Its subcellular location is the cell membrane. The protein localises to the cell junction. It localises to the synapse. Its function is as follows. Required to anchor acetylcholinesterase (ACHE) to the basal lamina of the neuromuscular junction and to the membrane of neuronal synapses in brain. Organizes ACHE into tetramers. The sequence is that of Proline-rich membrane anchor 1 (Prima1) from Rattus norvegicus (Rat).